A 230-amino-acid polypeptide reads, in one-letter code: Cytidylate kinase (230 aa).

13–21 (GPAGTGKSS) is a binding site for ATP.

This sequence belongs to the cytidylate kinase family. Type 1 subfamily.

Its subcellular location is the cytoplasm. The enzyme catalyses CMP + ATP = CDP + ADP. It catalyses the reaction dCMP + ATP = dCDP + ADP. This Mycobacterium tuberculosis (strain ATCC 25177 / H37Ra) protein is Cytidylate kinase.